Here is a 91-residue protein sequence, read N- to C-terminus: Acyl carrier protein (91 aa).

The Carrier domain maps to Glu-6–Glu-81. Ser-41 is subject to O-(pantetheine 4'-phosphoryl)serine.

This sequence belongs to the acyl carrier protein (ACP) family. Post-translationally, 4'-phosphopantetheine is transferred from CoA to a specific serine of apo-ACP by AcpS. This modification is essential for activity because fatty acids are bound in thioester linkage to the sulfhydryl of the prosthetic group.

Its subcellular location is the cytoplasm. It participates in lipid metabolism; fatty acid biosynthesis. Its function is as follows. Carrier of the growing fatty acid chain in fatty acid biosynthesis. This chain is Acyl carrier protein, found in Rhodococcus erythropolis (strain PR4 / NBRC 100887).